Reading from the N-terminus, the 415-residue chain is Glycerate 2-kinase (415 aa).

Lys57 serves as a coordination point for substrate.

Belongs to the glycerate kinase type-1 family. As to quaternary structure, homodimer. Mg(2+) serves as cofactor. The cofactor is Ni(2+). Requires Mn(2+) as cofactor. Co(2+) is required as a cofactor.

It carries out the reaction (R)-glycerate + ATP = (2R)-2-phosphoglycerate + ADP + H(+). Catalyzes the ATP-dependent phosphorylation of D-glycerate to 2-phosphoglycerate. It can also partially utilize GTP, CTP or UTP as phosphate donor. The protein is Glycerate 2-kinase (gck) of Picrophilus torridus (strain ATCC 700027 / DSM 9790 / JCM 10055 / NBRC 100828 / KAW 2/3).